We begin with the raw amino-acid sequence, 333 residues long: Eukaryotic translation initiation factor 3 subunit H-B (333 aa).

The 135-residue stretch at 20–154 (IQIEGLVVMK…LKAYRLTPKL (135 aa)) folds into the MPN domain. The segment at 249 to 295 (SKQQQQKHQYVQRRQQENAQRQSRGEPPLPEEDLTKMFKPPQPPPRM) is disordered. The segment covering 250 to 261 (KQQQQKHQYVQR) has biased composition (low complexity).

The protein belongs to the eIF-3 subunit H family. As to quaternary structure, component of the eukaryotic translation initiation factor 3 (eIF-3) complex, which is composed of 13 subunits: eif3a, eif3b, eif3c, eif3d, eif3e, eif3f, eif3g, eif3h, eif3i, eif3j, eif3k, eif3l and eif3m.

Its subcellular location is the cytoplasm. In terms of biological role, component of the eukaryotic translation initiation factor 3 (eIF-3) complex, which is involved in protein synthesis of a specialized repertoire of mRNAs and, together with other initiation factors, stimulates binding of mRNA and methionyl-tRNAi to the 40S ribosome. The eIF-3 complex specifically targets and initiates translation of a subset of mRNAs involved in cell proliferation. This Danio rerio (Zebrafish) protein is Eukaryotic translation initiation factor 3 subunit H-B (eif3hb).